A 200-amino-acid polypeptide reads, in one-letter code: Small ribosomal subunit protein uS4 (200 aa).

Residues 22-42 (TGKELEKRPYAPGPHGPGQRK) form a disordered region. One can recognise an S4 RNA-binding domain in the interval 92–155 (ARLDNVVYKL…RNLSIIKESV (64 aa)).

The protein belongs to the universal ribosomal protein uS4 family. As to quaternary structure, part of the 30S ribosomal subunit. Contacts protein S5. The interaction surface between S4 and S5 is involved in control of translational fidelity.

Functionally, one of the primary rRNA binding proteins, it binds directly to 16S rRNA where it nucleates assembly of the body of the 30S subunit. With S5 and S12 plays an important role in translational accuracy. The polypeptide is Small ribosomal subunit protein uS4 (Bacillus velezensis (strain DSM 23117 / BGSC 10A6 / LMG 26770 / FZB42) (Bacillus amyloliquefaciens subsp. plantarum)).